The following is a 68-amino-acid chain: uncharacterized protein (68 aa).

This is an uncharacterized protein from Escherichia coli (Bacteriophage T4).